A 306-amino-acid chain; its full sequence is D-alanine--D-alanine ligase (306 aa).

The 203-residue stretch at 101–303 (KQVWQAVGLP…FSQLVVKILE (203 aa)) folds into the ATP-grasp domain. Residue 134–189 (FTHLGLPLIVKPSREGSSVGMSKVNTLSDLPAALEEAFRHDDDVLVEKWLSGPEYT) participates in ATP binding. Mg(2+) contacts are provided by D257, E270, and N272.

It belongs to the D-alanine--D-alanine ligase family. Mg(2+) serves as cofactor. It depends on Mn(2+) as a cofactor.

Its subcellular location is the cytoplasm. The catalysed reaction is 2 D-alanine + ATP = D-alanyl-D-alanine + ADP + phosphate + H(+). It functions in the pathway cell wall biogenesis; peptidoglycan biosynthesis. Its function is as follows. Cell wall formation. The protein is D-alanine--D-alanine ligase of Pectobacterium atrosepticum (strain SCRI 1043 / ATCC BAA-672) (Erwinia carotovora subsp. atroseptica).